The primary structure comprises 116 residues: uncharacterized protein (116 aa).

In terms of domain architecture, HTH cro/C1-type spans 6-60 (LKKCRKQKKLTQQNMADKLGITRPAYTAYELGSREPDYKTLINISNILDVSLDYL). The segment at residues 17–36 (QQNMADKLGITRPAYTAYEL) is a DNA-binding region (H-T-H motif).

This is an uncharacterized protein from Bacillus subtilis (strain 168).